Consider the following 145-residue polypeptide: MDLTSKVNRLLAEFAGRIGLPSLSLDEEGMASLLFDEQVGVTLLLLAERERLLLEADVAGIDVLGEGIFRQLASFNRHWHRFDLHFGFDELTGKVQLYAQILAAQLTLECFEATLANLLDHAEFWQRLLPCDSDREAVAAVGMRV.

In terms of assembly, homodimer. Interacts with ExsE. Interacts directly with ExsD to form a heterotetrameric complex.

It localises to the cytoplasm. Its activity is regulated as follows. In the absence of inducing signals, ExsE interacts with and inhibits ExsC activity. In terms of biological role, part of the regulatory cascade that plays a role in the transcriptional regulation of the type III secretion system (T3SS). Interacts with antiactivator ExsD to inhibit its activity leading to ExsA-mediated transcription. The sequence is that of Transcriptional anti-antiactivator ExsC (exsC) from Pseudomonas aeruginosa (strain ATCC 15692 / DSM 22644 / CIP 104116 / JCM 14847 / LMG 12228 / 1C / PRS 101 / PAO1).